We begin with the raw amino-acid sequence, 473 residues long: Fumarate hydratase class II (473 aa).

Substrate-binding positions include 104-106 (SGT), 128-131 (HPND), 138-140 (SSN), and Thr186. The active-site Proton donor/acceptor is His187. Ser318 is a catalytic residue. Residues Ser319 and 324–326 (KVN) each bind substrate.

Belongs to the class-II fumarase/aspartase family. Fumarase subfamily. As to quaternary structure, homotetramer.

Its subcellular location is the cytoplasm. It carries out the reaction (S)-malate = fumarate + H2O. The protein operates within carbohydrate metabolism; tricarboxylic acid cycle; (S)-malate from fumarate: step 1/1. Functionally, involved in the TCA cycle. Catalyzes the stereospecific interconversion of fumarate to L-malate. The sequence is that of Fumarate hydratase class II from Corynebacterium glutamicum (strain ATCC 13032 / DSM 20300 / JCM 1318 / BCRC 11384 / CCUG 27702 / LMG 3730 / NBRC 12168 / NCIMB 10025 / NRRL B-2784 / 534).